A 242-amino-acid chain; its full sequence is Sugar fermentation stimulation protein homolog (242 aa).

It belongs to the SfsA family.

The sequence is that of Sugar fermentation stimulation protein homolog from Rippkaea orientalis (strain PCC 8801 / RF-1) (Cyanothece sp. (strain PCC 8801)).